The chain runs to 759 residues: Multifunctional tryptophan biosynthesis protein (759 aa).

The region spanning 27 to 223 is the Glutamine amidotransferase type-1 domain; it reads PIVMIDNYDS…LNLTAGTWEE (197 aa). 80-82 contacts L-glutamine; sequence GPG. Cys108 functions as the Nucleophile; for GATase activity in the catalytic mechanism. Residues Gln112 and 158–159 each bind L-glutamine; that span reads SL. Residues His197 and Glu199 each act as for GATase activity in the active site. The segment at 257 to 519 is indole-3-glycerol phosphate synthase; the sequence is ILEKIHAQRL…DPAAFARELL (263 aa). The interval 536-759 is N-(5'-phosphoribosyl)anthranilate isomerase; it reads LVKVCGTRSL…KAFINAVKEL (224 aa).

The enzyme catalyses N-(5-phospho-beta-D-ribosyl)anthranilate = 1-(2-carboxyphenylamino)-1-deoxy-D-ribulose 5-phosphate. The catalysed reaction is 1-(2-carboxyphenylamino)-1-deoxy-D-ribulose 5-phosphate + H(+) = (1S,2R)-1-C-(indol-3-yl)glycerol 3-phosphate + CO2 + H2O. It carries out the reaction chorismate + L-glutamine = anthranilate + pyruvate + L-glutamate + H(+). Its pathway is amino-acid biosynthesis; L-tryptophan biosynthesis; L-tryptophan from chorismate: step 1/5. It functions in the pathway amino-acid biosynthesis; L-tryptophan biosynthesis; L-tryptophan from chorismate: step 3/5. The protein operates within amino-acid biosynthesis; L-tryptophan biosynthesis; L-tryptophan from chorismate: step 4/5. In terms of biological role, trifunctional enzyme bearing the Gln amidotransferase (GATase) domain of anthranilate synthase, indole-glycerolphosphate synthase, and phosphoribosylanthranilate isomerase activities. In Schizosaccharomyces pombe (strain 972 / ATCC 24843) (Fission yeast), this protein is Multifunctional tryptophan biosynthesis protein (trp1).